Reading from the N-terminus, the 311-residue chain is Putative dihydroorotate dehydrogenase A (fumarate) (311 aa).

Substrate-binding positions include lysine 45, 69 to 73 (NSMGL), and asparagine 128. Residue 45-46 (KT) participates in FMN binding. Position 128 (asparagine 128) interacts with FMN. The Nucleophile role is filled by cysteine 131. Positions 165 and 193 each coordinate FMN. 194 to 195 (NS) contributes to the substrate binding site. FMN contacts are provided by residues glycine 220, 248-249 (GG), and 270-271 (GT).

This sequence belongs to the dihydroorotate dehydrogenase family. Type 1 subfamily. Homodimer. Requires FMN as cofactor.

Its subcellular location is the cytoplasm. It carries out the reaction (S)-dihydroorotate + fumarate = orotate + succinate. It participates in pyrimidine metabolism; UMP biosynthesis via de novo pathway. Catalyzes the conversion of dihydroorotate to orotate with fumarate as the electron acceptor. This is Putative dihydroorotate dehydrogenase A (fumarate) (pyrD) from Streptococcus pyogenes serotype M5 (strain Manfredo).